Here is a 216-residue protein sequence, read N- to C-terminus: Small ribosomal subunit protein eS6 (216 aa).

The protein belongs to the eukaryotic ribosomal protein eS6 family.

This Staphylothermus marinus (strain ATCC 43588 / DSM 3639 / JCM 9404 / F1) protein is Small ribosomal subunit protein eS6.